A 906-amino-acid chain; its full sequence is Glutamate receptor 1 (906 aa).

An N-terminal signal peptide occupies residues 1–18 (MQHIFAFFCTGFLGAVVG). Topologically, residues 19–536 (ANFPNNIQIG…GVFSFLDPLA (518 aa)) are extracellular. Residues Asn-63, Asn-249, Asn-257, Asn-363, Asn-401, and Asn-406 are each glycosylated (N-linked (GlcNAc...) asparagine). Cys-75 and Cys-323 are disulfide-bonded. 3 residues coordinate L-glutamate: Pro-492, Thr-494, and Arg-499. A helical transmembrane segment spans residues 537-557 (YEIWMCIVFAYIGVSVVLFLV). Topologically, residues 558 to 584 (SRFSPYEWHSEEFEEGRDQTTSDQSNE) are cytoplasmic. Residues 585-600 (FGIFNSLWFSLGAFMQ) constitute an intramembrane region (helical; Pore-forming). Residues 601–603 (QGC) lie within the membrane without spanning it. Residue Cys-603 is the site of S-palmitoyl cysteine attachment. Topologically, residues 604–609 (DISPRS) are cytoplasmic. Residues 610-630 (LSGRIVGGVWWFFTLIIISSY) form a helical membrane-spanning segment. Residues 631 to 805 (TANLAAFLTV…DKTSALSLSN (175 aa)) are Extracellular-facing. A Phosphoserine modification is found at Ser-645. Residues Ser-668 and Thr-669 each contribute to the L-glutamate site. Ser-710 carries the post-translational modification Phosphoserine. Position 719 (Glu-719) interacts with L-glutamate. An intrachain disulfide couples Cys-732 to Cys-787. The helical transmembrane segment at 806–826 (VAGVFYILIGGLGLAMLVALI) threads the bilayer. The Cytoplasmic segment spans residues 827–906 (EFCYKSRSES…SGMPLGATGL (80 aa)). The S-palmitoyl cysteine moiety is linked to residue Cys-829. Residues Ser-849 and Ser-863 each carry the phosphoserine modification. A disordered region spans residues 861–880 (RNSGAGASSGGSGENGRVVS). A PDZ-binding motif is present at residues 903–906 (ATGL).

Belongs to the glutamate-gated ion channel (TC 1.A.10.1) family. GRIA1 subfamily. Homotetramer or heterotetramer of pore-forming glutamate receptor subunits; heteromeric assembly can be the result of both receptor subtype and flip or flop form and according the composition, one partner can be dominant with respect to the fast desensitizing current component, whereas the other can determine the steady-state component. Tetramers may be formed by the dimerization of dimers. Found in a complex with GRIA2, GRIA3, GRIA4, CNIH2, CNIH3, CACNG2, CACNG3, CACNG4, CACNG5, CACNG7 and CACNG8. Interacts with HIP1 and RASGRF2. Interacts with SYNDIG1 and GRIA2. Interacts with DLG1 (via C-terminus). Interacts with LRFN1. Interacts with PRKG2. Interacts with CNIH2 and CACNG2. Interacts with CACNG5; this interaction modulates the gating. Interacts (via C-terminus) with PDLIM4 (via LIM domain); this interaction as well as the interaction of PDLIM4 with alpha-actinin is required for their colocalization in early endosomes. Interacts with SNX27 (via PDZ domain); the interaction is required for recycling to the plasma membrane when endocytosed and prevent degradation in lysosomes. Interacts (via PDZ-binding motif) with SHANK3 (via PDZ domain). Interacts with CACNG3; associates GRIA1 with the adapter protein complex 4 (AP-4) to target GRIA1 to the somatodendritic compartment of neurons. Interacts with CACNG2; this interaction mediates traffick to the plasma membrane and modulation of desensitization. Interacts with CNIH2 and CNIH3; this interaction promotes expression at the plasma membrane and extensively modulates their gating properties by slowing deactivation and desensitization kinetics. Found in a complex with GRIA2, GRIA3, GRIA4, DLG4, CACNG8 and CNIH2. In terms of processing, palmitoylated. Depalmitoylated by CPT1C and upon L-glutamate stimulation. ZDHHC3/GODZ specifically palmitoylates Cys-603, which leads to Golgi retention and decreased cell surface expression. In contrast, Cys-829 palmitoylation does not affect cell surface expression but regulates stimulation-dependent endocytosis. Post-translationally, phosphorylated at Ser-645. Phosphorylated at Ser-710 by PKC. Phosphorylated at Ser-849 by PKC, PKA and CAMK2. Phosphorylated at Ser-863 by PKC, PKA and PRKG2. Phosphorylation of Ser-863 is reduced by induction of long-term depression and increased by induction of long-term potentiation. As to expression, widely expressed in brain.

The protein localises to the cell membrane. Its subcellular location is the endoplasmic reticulum membrane. The protein resides in the postsynaptic cell membrane. It localises to the postsynaptic density membrane. It is found in the cell projection. The protein localises to the dendrite. Its subcellular location is the dendritic spine. The protein resides in the early endosome membrane. It localises to the recycling endosome membrane. It is found in the presynapse. The protein localises to the synapse. It catalyses the reaction Ca(2+)(in) = Ca(2+)(out). It carries out the reaction Na(+)(in) = Na(+)(out). The enzyme catalyses Mg(2+)(in) = Mg(2+)(out). The catalysed reaction is Li(+)(in) = Li(+)(out). It catalyses the reaction K(+)(in) = K(+)(out). It carries out the reaction Sr(2+)(in) = Sr(2+)(out). Ionotropic glutamate receptor that functions as a ligand-gated cation channel, gated by L-glutamate and glutamatergic agonists such as alpha-amino-3-hydroxy-5-methyl-4-isoxazolepropionic acid (AMPA), quisqualic acid, and kainic acid. L-glutamate acts as an excitatory neurotransmitter at many synapses in the central nervous system. Binding of the excitatory neurotransmitter L-glutamate induces a conformation change, leading to the opening of the cation channel, and thereby converts the chemical signal to an electrical impulse upon entry of monovalent and divalent cations such as sodium and calcium. The receptor then desensitizes rapidly and enters in a transient inactive state, characterized by the presence of bound agonist. In the presence of CACNG2 or CACNG4 or CACNG7 or CACNG8, shows resensitization which is characterized by a delayed accumulation of current flux upon continued application of L-glutamate. Resensitization is blocked by CNIH2 through interaction with CACNG8 in the CACNG8-containing AMPA receptors complex. Calcium (Ca(2+)) permeability depends on subunits composition and, heteromeric channels containing edited GRIA2 subunit are calcium-impermeable. Also permeable to other divalents cations such as strontium(2+) and magnesium(2+) and monovalent cations such as potassium(1+) and lithium(1+). In Homo sapiens (Human), this protein is Glutamate receptor 1.